The chain runs to 379 residues: 1-deoxy-D-xylulose 5-phosphate reductoisomerase (379 aa).

NADPH-binding residues include threonine 10, glycine 11, serine 12, isoleucine 13, arginine 38, asparagine 39, and asparagine 121. Lysine 122 contacts 1-deoxy-D-xylulose 5-phosphate. Glutamate 123 contacts NADPH. Mn(2+) is bound at residue aspartate 147. Residues serine 148, glutamate 149, serine 173, and histidine 196 each coordinate 1-deoxy-D-xylulose 5-phosphate. Glutamate 149 contacts Mn(2+). Glycine 202 serves as a coordination point for NADPH. Positions 209, 214, 215, and 218 each coordinate 1-deoxy-D-xylulose 5-phosphate. Glutamate 218 is a Mn(2+) binding site.

Belongs to the DXR family. It depends on Mg(2+) as a cofactor. Mn(2+) is required as a cofactor.

It carries out the reaction 2-C-methyl-D-erythritol 4-phosphate + NADP(+) = 1-deoxy-D-xylulose 5-phosphate + NADPH + H(+). The protein operates within isoprenoid biosynthesis; isopentenyl diphosphate biosynthesis via DXP pathway; isopentenyl diphosphate from 1-deoxy-D-xylulose 5-phosphate: step 1/6. In terms of biological role, catalyzes the NADPH-dependent rearrangement and reduction of 1-deoxy-D-xylulose-5-phosphate (DXP) to 2-C-methyl-D-erythritol 4-phosphate (MEP). The protein is 1-deoxy-D-xylulose 5-phosphate reductoisomerase of Chlamydia muridarum (strain MoPn / Nigg).